We begin with the raw amino-acid sequence, 99 residues long: Plastocyanin (99 aa).

Positions 1-99 (IEVLLGGDDG…AGMVGKVTVN (99 aa)) constitute a Plastocyanin-like domain. Residues H37, C84, H87, and M92 each contribute to the Cu cation site.

The protein belongs to the plastocyanin family. The cofactor is Cu(2+).

The protein localises to the plastid. The protein resides in the chloroplast thylakoid membrane. Participates in electron transfer between P700 and the cytochrome b6-f complex in photosystem I. The chain is Plastocyanin (PETE) from Cucurbita pepo (Vegetable marrow).